Here is a 244-residue protein sequence, read N- to C-terminus: Cysteine-rich secretory protein 1 (244 aa).

A signal peptide spans 1 to 19; it reads MALMLVLFFLAAVLPPSLL. Residues 44-170 form the SCP domain; sequence SKHNQLRRMV…PLRYYYVCHY (127 aa). N-linked (GlcNAc...) asparagine glycosylation is present at asparagine 145. Intrachain disulfides connect cysteine 190/cysteine 197, cysteine 193/cysteine 202, cysteine 206/cysteine 239, cysteine 215/cysteine 233, and cysteine 224/cysteine 237. Positions 206-239 constitute a ShKT domain; sequence CGHEDKYTNCKYLKKMLSCEHELLKKGCKATCLC.

It belongs to the CRISP family. In terms of tissue distribution, mainly found in the cauda epididymis where it is synthesized by the principal cells and secreted into the lumen. Binds to the heads of spermatozoa. Also expressed in the submandibular gland.

The protein localises to the cytoplasmic vesicle. It localises to the secretory vesicle. This protein is supposed to help spermatozoa undergo functional maturation while they move from the testis to the ductus deferens. The sequence is that of Cysteine-rich secretory protein 1 (Crisp1) from Mus musculus (Mouse).